Here is a 341-residue protein sequence, read N- to C-terminus: O(6)-methylguanine-induced apoptosis 2 (341 aa).

Polar residues predominate over residues 1–10 (MSQKFANTGS). The interval 1–23 (MSQKFANTGSFIEREDLGKPNKG) is disordered. Residues 12–23 (IEREDLGKPNKG) are compositionally biased toward basic and acidic residues. 7 STPGR repeats span residues 73–80 (PGPGFYNV), 115–123 (PAANAYTIR), 154–160 (PAPNHYN), 194–213 (GPAP…SPKV), 232–254 (GPGP…HLPK), 273–284 (LPGPGQYEIVNY), and 313–323 (LPGPASYKPEI). The residue at position 78 (tyrosine 78) is a Phosphotyrosine.

This sequence belongs to the STPG1 family.

The protein resides in the cytoplasm. It is found in the nucleus. Functionally, may positively contribute to the induction of apoptosis triggered by O(6)-methylguanine. In Rattus norvegicus (Rat), this protein is O(6)-methylguanine-induced apoptosis 2 (Stpg1).